Consider the following 373-residue polypeptide: 3-dehydroquinate synthase (373 aa).

NAD(+) is bound by residues 67-72 (EGEETK), 101-105 (GVILD), 125-126 (TT), K138, and K147. Zn(2+) contacts are provided by E180, H240, and H256.

Belongs to the sugar phosphate cyclases superfamily. Dehydroquinate synthase family. It depends on NAD(+) as a cofactor. The cofactor is Co(2+). Requires Zn(2+) as cofactor.

The protein localises to the cytoplasm. The catalysed reaction is 7-phospho-2-dehydro-3-deoxy-D-arabino-heptonate = 3-dehydroquinate + phosphate. Its pathway is metabolic intermediate biosynthesis; chorismate biosynthesis; chorismate from D-erythrose 4-phosphate and phosphoenolpyruvate: step 2/7. Catalyzes the conversion of 3-deoxy-D-arabino-heptulosonate 7-phosphate (DAHP) to dehydroquinate (DHQ). The chain is 3-dehydroquinate synthase from Chlamydia trachomatis serovar A (strain ATCC VR-571B / DSM 19440 / HAR-13).